A 126-amino-acid polypeptide reads, in one-letter code: FCS-Like Zinc finger 17 (126 aa).

An FLZ-type zinc finger spans residues 41–85 (CFLKTCHLCNKQLHQDKDVYMYRGDLGFCSRECRESQMLIDDRKE).

This sequence belongs to the FLZ family. Interacts with KIN10 and KIN11 via its FLZ-type zinc finger domain. Forms heterodimer with FLZ2 in vitro.

It localises to the nucleus. It is found in the cytoplasm. Its function is as follows. May act as an adapter to facilitate the interaction of SnRK1 complex with effector proteins, conferring tissue- and stimulus-type specific differences in the SnRK1 regulation pathway. This is FCS-Like Zinc finger 17 from Arabidopsis thaliana (Mouse-ear cress).